The sequence spans 95 residues: Aspartyl/glutamyl-tRNA(Asn/Gln) amidotransferase subunit C (95 aa).

Belongs to the GatC family. As to quaternary structure, heterotrimer of A, B and C subunits.

It catalyses the reaction L-glutamyl-tRNA(Gln) + L-glutamine + ATP + H2O = L-glutaminyl-tRNA(Gln) + L-glutamate + ADP + phosphate + H(+). It carries out the reaction L-aspartyl-tRNA(Asn) + L-glutamine + ATP + H2O = L-asparaginyl-tRNA(Asn) + L-glutamate + ADP + phosphate + 2 H(+). Functionally, allows the formation of correctly charged Asn-tRNA(Asn) or Gln-tRNA(Gln) through the transamidation of misacylated Asp-tRNA(Asn) or Glu-tRNA(Gln) in organisms which lack either or both of asparaginyl-tRNA or glutaminyl-tRNA synthetases. The reaction takes place in the presence of glutamine and ATP through an activated phospho-Asp-tRNA(Asn) or phospho-Glu-tRNA(Gln). The chain is Aspartyl/glutamyl-tRNA(Asn/Gln) amidotransferase subunit C from Halothermothrix orenii (strain H 168 / OCM 544 / DSM 9562).